The following is a 202-amino-acid chain: Protein phosphatase 1 regulatory subunit 1B (202 aa).

Position 1 is an N-acetylmethionine (methionine 1). The disordered stretch occupies residues 1–202 (MDPKDRKKIQ…QRPAHPEPGT (202 aa)). Threonine 34 bears the Phosphothreonine; by PKA mark. A compositionally biased stretch (basic and acidic residues) spans 41–63 (LSEHSSPEEEASPHQRASGEGHH). Serine 45 and serine 46 each carry phosphoserine. Threonine 75 is subject to Phosphothreonine; by CDK5. The span at 89-100 (HLQSISNLGENQ) shows a compositional bias: polar residues. Serine 102 carries the phosphoserine modification. The span at 109–118 (GELRELGYPR) shows a compositional bias: basic and acidic residues. Over residues 119-136 (EEEEEEEEEDEEEEEDSQ) the composition is skewed to acidic residues. Residue serine 135 is modified to Phosphoserine. The span at 191–202 (EPQRPAHPEPGT) shows a compositional bias: basic and acidic residues.

Belongs to the protein phosphatase inhibitor 1 family. Dopamine- and cyclic AMP-regulated neuronal phosphoprotein. Post-translationally, phosphorylation of Thr-34 is required for activity.

It is found in the cytoplasm. In terms of biological role, inhibitor of protein-phosphatase 1. The sequence is that of Protein phosphatase 1 regulatory subunit 1B (PPP1R1B) from Bos taurus (Bovine).